Reading from the N-terminus, the 374-residue chain is Putative glutamate--cysteine ligase 2-1 (374 aa).

The protein belongs to the glutamate--cysteine ligase type 2 family. YbdK subfamily.

It carries out the reaction L-cysteine + L-glutamate + ATP = gamma-L-glutamyl-L-cysteine + ADP + phosphate + H(+). Functionally, ATP-dependent carboxylate-amine ligase which exhibits weak glutamate--cysteine ligase activity. The chain is Putative glutamate--cysteine ligase 2-1 from Saccharopolyspora erythraea (strain ATCC 11635 / DSM 40517 / JCM 4748 / NBRC 13426 / NCIMB 8594 / NRRL 2338).